A 253-amino-acid polypeptide reads, in one-letter code: Ubiquinone/menaquinone biosynthesis C-methyltransferase UbiE (253 aa).

Residues Thr76, Asp97, and 125 to 126 (NA) each bind S-adenosyl-L-methionine.

Belongs to the class I-like SAM-binding methyltransferase superfamily. MenG/UbiE family.

It catalyses the reaction a 2-demethylmenaquinol + S-adenosyl-L-methionine = a menaquinol + S-adenosyl-L-homocysteine + H(+). The enzyme catalyses a 2-methoxy-6-(all-trans-polyprenyl)benzene-1,4-diol + S-adenosyl-L-methionine = a 5-methoxy-2-methyl-3-(all-trans-polyprenyl)benzene-1,4-diol + S-adenosyl-L-homocysteine + H(+). Its pathway is quinol/quinone metabolism; menaquinone biosynthesis; menaquinol from 1,4-dihydroxy-2-naphthoate: step 2/2. The protein operates within cofactor biosynthesis; ubiquinone biosynthesis. In terms of biological role, methyltransferase required for the conversion of demethylmenaquinol (DMKH2) to menaquinol (MKH2) and the conversion of 2-polyprenyl-6-methoxy-1,4-benzoquinol (DDMQH2) to 2-polyprenyl-3-methyl-6-methoxy-1,4-benzoquinol (DMQH2). This chain is Ubiquinone/menaquinone biosynthesis C-methyltransferase UbiE, found in Rhodopseudomonas palustris (strain HaA2).